We begin with the raw amino-acid sequence, 493 residues long: Adenylyltransferase and sulfurtransferase uba4 (493 aa).

ATP contacts are provided by residues Gly99, Asp120, Ser127–Arg131, Lys144, and Asp188–Asn189. Positions 237 and 240 each coordinate Zn(2+). The active-site Glycyl thioester intermediate; for adenylyltransferase activity is the Cys254. The Zn(2+) site is built by Cys316 and Cys319. Residues Ile376–Pro491 enclose the Rhodanese domain. Cys446 serves as the catalytic Cysteine persulfide intermediate; for sulfurtransferase activity.

This sequence in the N-terminal section; belongs to the HesA/MoeB/ThiF family. UBA4 subfamily. Requires Zn(2+) as cofactor.

Its subcellular location is the cytoplasm. It is found in the cytosol. It carries out the reaction [molybdopterin-synthase sulfur-carrier protein]-C-terminal Gly-Gly + ATP + H(+) = [molybdopterin-synthase sulfur-carrier protein]-C-terminal Gly-Gly-AMP + diphosphate. The catalysed reaction is [molybdopterin-synthase sulfur-carrier protein]-C-terminal Gly-Gly-AMP + S-sulfanyl-L-cysteinyl-[cysteine desulfurase] + AH2 = [molybdopterin-synthase sulfur-carrier protein]-C-terminal-Gly-aminoethanethioate + L-cysteinyl-[cysteine desulfurase] + A + AMP + 2 H(+). It functions in the pathway tRNA modification; 5-methoxycarbonylmethyl-2-thiouridine-tRNA biosynthesis. The protein operates within cofactor biosynthesis; molybdopterin biosynthesis. Plays a central role in 2-thiolation of mcm(5)S(2)U at tRNA wobble positions of cytosolic tRNA(Lys), tRNA(Glu) and tRNA(Gln). Also essential during biosynthesis of the molybdenum cofactor. Acts by mediating the C-terminal thiocarboxylation of sulfur carriers urm1 and mocs2a. Its N-terminus first activates urm1 and mocs2a as acyl-adenylates (-COAMP), then the persulfide sulfur on the catalytic cysteine is transferred to urm1 and mocs2a to form thiocarboxylation (-COSH) of their C-terminus. The reaction probably involves hydrogen sulfide that is generated from the persulfide intermediate and that acts as a nucleophile towards urm1 and mocs2a. Subsequently, a transient disulfide bond is formed. Does not use thiosulfate as sulfur donor; nfs1 probably acting as a sulfur donor for thiocarboxylation reactions. This chain is Adenylyltransferase and sulfurtransferase uba4, found in Aspergillus fumigatus (strain ATCC MYA-4609 / CBS 101355 / FGSC A1100 / Af293) (Neosartorya fumigata).